The primary structure comprises 786 residues: Tyrosine-protein kinase Btk (786 aa).

Positions 1–23 (MMGTKHRNSHVNGSIKSSSSLRS) are disordered. Residues 14–23 (SIKSSSSLRS) show a composition bias toward low complexity. In terms of domain architecture, PH spans 41–184 (DVVKSGSMVK…WIRAIRQVCE (144 aa)). The Btk-type zinc finger occupies 187–223 (NTPKSYRYHPGLWSGKKWSCCKGLSRTTFGCRAAAHW). Zn(2+) is bound by residues His195, Cys206, Cys207, and Cys217. Residues 226-240 (ANNNPSNGSSPAQNS) are compositionally biased toward low complexity. The interval 226-301 (ANNNPSNGSS…TPTSLQPQSS (76 aa)) is disordered. Positions 241-260 (TRSISPNSSTTNSQFSLQHN) are enriched in polar residues. Over residues 264–290 (SLGGGVGGGLGGGGSLGLGGGGGGGGS) the composition is skewed to gly residues. Positions 291-301 (CTPTSLQPQSS) are enriched in polar residues. The 61-residue stretch at 342-402 (HFVKLVVALY…PSNYVKPKAL (61 aa)) folds into the SH3 domain. In terms of domain architecture, SH2 spans 410–503 (WYVGDMSRQR…GLACRLKSSP (94 aa)). Positions 526-779 (LMLMEELGSG…FRVLMDQLAL (254 aa)) constitute a Protein kinase domain. ATP-binding positions include 532 to 540 (LGSGQFGVV) and Lys554. Asp647 acts as the Proton acceptor in catalysis. At Tyr677 the chain carries Phosphotyrosine; by autocatalysis.

This sequence belongs to the protein kinase superfamily. Tyr protein kinase family. TEC subfamily. The cofactor is Zn(2+). In terms of tissue distribution, ring canals in the egg chambers and imaginal disks of third-instar larvae.

The catalysed reaction is L-tyrosyl-[protein] + ATP = O-phospho-L-tyrosyl-[protein] + ADP + H(+). Its function is as follows. Required for proper ring canal development. Also required for the development of male genitalia and for adult survival. This Drosophila melanogaster (Fruit fly) protein is Tyrosine-protein kinase Btk.